A 547-amino-acid chain; its full sequence is Chaperonin GroEL 1 (547 aa).

ATP is bound by residues 30–33 (TLGP), lysine 51, 87–91 (DGTTT), glycine 415, and aspartate 496.

It belongs to the chaperonin (HSP60) family. As to quaternary structure, forms a cylinder of 14 subunits composed of two heptameric rings stacked back-to-back. Interacts with the co-chaperonin GroES.

It is found in the cytoplasm. The enzyme catalyses ATP + H2O + a folded polypeptide = ADP + phosphate + an unfolded polypeptide.. Functionally, together with its co-chaperonin GroES, plays an essential role in assisting protein folding. The GroEL-GroES system forms a nano-cage that allows encapsulation of the non-native substrate proteins and provides a physical environment optimized to promote and accelerate protein folding. The polypeptide is Chaperonin GroEL 1 (Rhodopseudomonas palustris (strain BisA53)).